Reading from the N-terminus, the 129-residue chain is MAKEILQNSAHASVRMQRISPRKARLVADLIRYKSATQAIVILKHTHKKASEIILKLLNSAIANATNNAGLDATKLYVTTILVNDGPTLKRFQPHSRGRAYAILKRTSHFFIELTEINNVEEINKKGDK.

Belongs to the universal ribosomal protein uL22 family. In terms of assembly, part of the 50S ribosomal subunit.

In terms of biological role, this protein binds specifically to 23S rRNA; its binding is stimulated by other ribosomal proteins, e.g. L4, L17, and L20. It is important during the early stages of 50S assembly. It makes multiple contacts with different domains of the 23S rRNA in the assembled 50S subunit and ribosome. Functionally, the globular domain of the protein is located near the polypeptide exit tunnel on the outside of the subunit, while an extended beta-hairpin is found that lines the wall of the exit tunnel in the center of the 70S ribosome. The polypeptide is Large ribosomal subunit protein uL22 (Metamycoplasma hominis (strain ATCC 23114 / DSM 25592 / NBRC 14850 / NCTC 10111 / PG21) (Mycoplasma hominis)).